The following is a 466-amino-acid chain: MAKTLYEKLFDAHVVYEAENETPLLYIDRHLVHEVTSPQAFDGLRAHGRPVRQPGKTFATMDHNVSTQTKDINACGEMARIQMQELIKNCKEFGVELYDLNHPYQGIVHVMGPEQGVTLPGMTIVCGDSHTATHGAFGALAFGIGTSEVEHVLATQTLKQGRAKTMKIEVQGKAAPGITAKDIVLAIIGKTGSAGGTGHVVEFCGEAIRDLSMEGRMTLCNMAIEMGAKAGLVAPDETTFNYVKGRLHAPKGKDFDDAIAYWKTLQTDEGATFDTVVTLQAEEISPQVTWGTNPGQVISVNDNIPDPASFADPVERASAEKALAYMGLKPGIPLTEVAIDKVFIGSCTNSRIEDLRAAAEIAKGRKVAPGVQALVVPGSGPVKAQAEAEGLDKIFIEAGFEWRLPGCSMCLAMNNDRLNPGERCASTSNRNFEGRQGRGGRTHLVSPAMAAAAAVTGHFADIRNIK.

Cys347, Cys407, and Cys410 together coordinate [4Fe-4S] cluster.

The protein belongs to the aconitase/IPM isomerase family. LeuC type 1 subfamily. Heterodimer of LeuC and LeuD. [4Fe-4S] cluster serves as cofactor.

It catalyses the reaction (2R,3S)-3-isopropylmalate = (2S)-2-isopropylmalate. Its pathway is amino-acid biosynthesis; L-leucine biosynthesis; L-leucine from 3-methyl-2-oxobutanoate: step 2/4. Its function is as follows. Catalyzes the isomerization between 2-isopropylmalate and 3-isopropylmalate, via the formation of 2-isopropylmaleate. The protein is 3-isopropylmalate dehydratase large subunit of Escherichia coli O9:H4 (strain HS).